A 1024-amino-acid chain; its full sequence is Error-prone DNA polymerase (1024 aa).

Belongs to the DNA polymerase type-C family. DnaE2 subfamily.

The protein localises to the cytoplasm. The catalysed reaction is DNA(n) + a 2'-deoxyribonucleoside 5'-triphosphate = DNA(n+1) + diphosphate. Functionally, DNA polymerase involved in damage-induced mutagenesis and translesion synthesis (TLS). It is not the major replicative DNA polymerase. The chain is Error-prone DNA polymerase from Vibrio vulnificus (strain YJ016).